A 362-amino-acid polypeptide reads, in one-letter code: D-alanine--D-alanine ligase (362 aa).

Residues 153–357 (KKIAREAGIP…YADLLTTLVS (205 aa)) enclose the ATP-grasp domain. ATP is bound at residue 180–235 (RELLGLPVFVKPARGGSSIGISKVDSWRDLPAAIEEAASHDPKVIIEAMITGPEVE). 3 residues coordinate Mg(2+): aspartate 312, glutamate 324, and asparagine 326.

Belongs to the D-alanine--D-alanine ligase family. Mg(2+) is required as a cofactor. It depends on Mn(2+) as a cofactor.

Its subcellular location is the cytoplasm. The catalysed reaction is 2 D-alanine + ATP = D-alanyl-D-alanine + ADP + phosphate + H(+). The protein operates within cell wall biogenesis; peptidoglycan biosynthesis. Cell wall formation. The polypeptide is D-alanine--D-alanine ligase (Corynebacterium urealyticum (strain ATCC 43042 / DSM 7109)).